We begin with the raw amino-acid sequence, 317 residues long: MNTWNELTVHVNREAEEAVSNLLIETGSQGVAISDSADYLGQEDRFGELYPEVEQSDMIAITAYYPDTLDIEAVKADLADRLANFEGFGLATGSVNLDSQELVEEDWADNWKKYYEPARITHDLTIVPSWTDYEAKAGEKIIKMDPGMAFGTGTHPTTKMSLFALEQVLRGGETVIDVGTGSGVLSIASSLLGAKDIYAYDLDDVAVRVAQENIDMNPGTENIHVAAGDLLKGVQQEVDVIVANILADILIHLTDDAYRLVKDEGYLIMSGIISEKWDMVRESAEKAGFFLETHMVQGEWNACVFKKTDDISGVIGG.

S-adenosyl-L-methionine-binding residues include Thr-158, Gly-179, Asp-201, and Asn-244.

This sequence belongs to the methyltransferase superfamily. PrmA family.

It is found in the cytoplasm. The catalysed reaction is L-lysyl-[protein] + 3 S-adenosyl-L-methionine = N(6),N(6),N(6)-trimethyl-L-lysyl-[protein] + 3 S-adenosyl-L-homocysteine + 3 H(+). Its function is as follows. Methylates ribosomal protein L11. The sequence is that of Ribosomal protein L11 methyltransferase from Streptococcus agalactiae serotype III (strain NEM316).